The primary structure comprises 353 residues: Putative glycosyltransferase TagX (353 aa).

The protein belongs to the glycosyltransferase 2 family.

The chain is Putative glycosyltransferase TagX (tagX) from Staphylococcus aureus (strain Mu50 / ATCC 700699).